We begin with the raw amino-acid sequence, 882 residues long: Leucine--tRNA ligase (882 aa).

The 'HIGH' region signature appears at 43–53 (PYPSGRIHMGH). The 'KMSKS' region signature appears at 634–638 (KMSKS). K637 is a binding site for ATP.

It belongs to the class-I aminoacyl-tRNA synthetase family.

It is found in the cytoplasm. It catalyses the reaction tRNA(Leu) + L-leucine + ATP = L-leucyl-tRNA(Leu) + AMP + diphosphate. The chain is Leucine--tRNA ligase from Rhodopseudomonas palustris (strain BisB18).